The chain runs to 902 residues: 4-hydroxyphenylacetate decarboxylase glycyl radical subunit (902 aa).

The PFL domain maps to 38–774 (KRAEDLLDVY…ATLATPDGRL (737 aa)). 4-hydroxyphenylacetate-binding residues include Ser-348 and Cys-507. Cys-507 functions as the Cysteine radical intermediate in the catalytic mechanism. The active-site Proton donor is Glu-509. 4-hydroxyphenylacetate is bound by residues His-540 and Glu-641. A Glycine radical domain is found at 782 to 902 (GSVSAYAGTD…VIARTEYEGV (121 aa)). Residue Gly-877 is modified to Glycine radical.

Belongs to the glycyl radical enzyme (GRE) family. HPAD subfamily. In terms of assembly, heterooctamer consisting of 4 large (HpdB) subunits and 4 small (HpdC) subunits, arranged as a tetramer of heterodimers. Also forms a catalytically inactive homodimer. Post-translationally, requires the activating protein CsdA to generate the key active site glycyl radical that is involved in catalysis. In terms of processing, phosphorylated on serine. Phosphorylation may trigger the formation of the active heterooctamers and thereby regulates enzyme activity.

The catalysed reaction is 4-hydroxyphenylacetate + H(+) = 4-methylphenol + CO2. The enzyme catalyses 3,4-dihydroxyphenylacetate + H(+) = 4-methylcatechol + CO2. Functionally, glycyl radical subunit of the HPA decarboxylase that decarboxylates phenylacetates with a hydroxyl group in the p-position. Active toward 4-hydroxyphenylacetate and 3,4-dihydroxyphenylacetate, forming 4-methylphenol and 4-methylcatechol, respectively. Is likely involved in the catabolism of aromatic amino acids such as tyrosine fermentation. 4-methylphenol (p-cresol) formation provides metabolic toxicity, which allows an active suppression of other microbes and may provide growth advantages for the producers in highly competitive environments. The large subunit is the catalytic subunit that binds the substrate. The protein is 4-hydroxyphenylacetate decarboxylase glycyl radical subunit of Clostridioides difficile (strain 630) (Peptoclostridium difficile).